Reading from the N-terminus, the 156-residue chain is Cyclic pyranopterin monophosphate synthase (156 aa).

Substrate contacts are provided by residues 75–77 (LCH) and 111–112 (ME). Asp126 is an active-site residue.

Belongs to the MoaC family. Homohexamer; trimer of dimers.

It catalyses the reaction (8S)-3',8-cyclo-7,8-dihydroguanosine 5'-triphosphate = cyclic pyranopterin phosphate + diphosphate. The protein operates within cofactor biosynthesis; molybdopterin biosynthesis. Catalyzes the conversion of (8S)-3',8-cyclo-7,8-dihydroguanosine 5'-triphosphate to cyclic pyranopterin monophosphate (cPMP). This is Cyclic pyranopterin monophosphate synthase from Corynebacterium glutamicum (strain R).